Reading from the N-terminus, the 81-residue chain is UPF0248 protein TK0315 (81 aa).

It belongs to the UPF0248 family.

In Thermococcus kodakarensis (strain ATCC BAA-918 / JCM 12380 / KOD1) (Pyrococcus kodakaraensis (strain KOD1)), this protein is UPF0248 protein TK0315.